Here is a 314-residue protein sequence, read N- to C-terminus: GTP cyclohydrolase FolE2 (314 aa).

Residues 290-314 (DASAWSAPQASAPDQQESFATGNER) form a disordered region. Low complexity predominate over residues 291 to 305 (ASAWSAPQASAPDQQ).

The protein belongs to the GTP cyclohydrolase IV family.

It carries out the reaction GTP + H2O = 7,8-dihydroneopterin 3'-triphosphate + formate + H(+). The protein operates within cofactor biosynthesis; 7,8-dihydroneopterin triphosphate biosynthesis; 7,8-dihydroneopterin triphosphate from GTP: step 1/1. Functionally, converts GTP to 7,8-dihydroneopterin triphosphate. This Pseudomonas putida (strain ATCC 700007 / DSM 6899 / JCM 31910 / BCRC 17059 / LMG 24140 / F1) protein is GTP cyclohydrolase FolE2.